We begin with the raw amino-acid sequence, 199 residues long: Shikimate kinase (199 aa).

14 to 19 (GSGKST) serves as a coordination point for ATP. Residue S18 coordinates Mg(2+). Substrate-binding residues include D36, R60, and G82. R120 provides a ligand contact to ATP. R147 provides a ligand contact to substrate. A disordered region spans residues 179-199 (YVRRAEKNQNSHSQTKKQSRK).

It belongs to the shikimate kinase family. In terms of assembly, monomer. Requires Mg(2+) as cofactor.

Its subcellular location is the cytoplasm. It carries out the reaction shikimate + ATP = 3-phosphoshikimate + ADP + H(+). It participates in metabolic intermediate biosynthesis; chorismate biosynthesis; chorismate from D-erythrose 4-phosphate and phosphoenolpyruvate: step 5/7. Functionally, catalyzes the specific phosphorylation of the 3-hydroxyl group of shikimic acid using ATP as a cosubstrate. This chain is Shikimate kinase, found in Chlorobium phaeobacteroides (strain BS1).